The primary structure comprises 179 residues: Large ribosomal subunit protein uL5 (179 aa).

It belongs to the universal ribosomal protein uL5 family. In terms of assembly, part of the 50S ribosomal subunit; part of the 5S rRNA/L5/L18/L25 subcomplex. Contacts the 5S rRNA and the P site tRNA. Forms a bridge to the 30S subunit in the 70S ribosome.

This is one of the proteins that bind and probably mediate the attachment of the 5S RNA into the large ribosomal subunit, where it forms part of the central protuberance. In the 70S ribosome it contacts protein S13 of the 30S subunit (bridge B1b), connecting the 2 subunits; this bridge is implicated in subunit movement. Contacts the P site tRNA; the 5S rRNA and some of its associated proteins might help stabilize positioning of ribosome-bound tRNAs. The chain is Large ribosomal subunit protein uL5 from Desulfotalea psychrophila (strain LSv54 / DSM 12343).